The primary structure comprises 139 residues: Small ribosomal subunit protein uS12 (139 aa).

The disordered stretch occupies residues 12 to 55; that stretch reads RVDKVKKSDSPALNKGYNSFKKSQTDVSSPQKRGVCTRVGTMTP. The segment covering 27 to 42 has biased composition (polar residues); the sequence is GYNSFKKSQTDVSSPQ. D102 carries the post-translational modification 3-methylthioaspartic acid. A disordered region spans residues 119-139; it reads GVQNRMQGRSKYGTKKPKDKK. The span at 130 to 139 shows a compositional bias: basic residues; it reads YGTKKPKDKK.

This sequence belongs to the universal ribosomal protein uS12 family. As to quaternary structure, part of the 30S ribosomal subunit. Contacts proteins S8 and S17. May interact with IF1 in the 30S initiation complex.

Functionally, with S4 and S5 plays an important role in translational accuracy. Its function is as follows. Interacts with and stabilizes bases of the 16S rRNA that are involved in tRNA selection in the A site and with the mRNA backbone. Located at the interface of the 30S and 50S subunits, it traverses the body of the 30S subunit contacting proteins on the other side and probably holding the rRNA structure together. The combined cluster of proteins S8, S12 and S17 appears to hold together the shoulder and platform of the 30S subunit. This is Small ribosomal subunit protein uS12 from Shouchella clausii (strain KSM-K16) (Alkalihalobacillus clausii).